The sequence spans 447 residues: uncharacterized protein (447 aa).

The segment at 39 to 76 (PQAAPYTRNNGMGECRRGHRQGHRAEVHDNRPADKVGQ) is disordered. Residues 61–72 (HRAEVHDNRPAD) are compositionally biased toward basic and acidic residues.

It belongs to the 3-oxoacid CoA-transferase subunit A family.

This is an uncharacterized protein from Archaeoglobus fulgidus (strain ATCC 49558 / DSM 4304 / JCM 9628 / NBRC 100126 / VC-16).